The primary structure comprises 632 residues: Probable electron transfer flavoprotein-ubiquinone oxidoreductase, mitochondrial (632 aa).

FAD is bound at residue 93–107 (VCIVGAGPAGLSAAI). C575, C601, C604, and C607 together coordinate [4Fe-4S] cluster. The region spanning 592-621 (KRFVINSQNCVHCKTCDIKDPLQGIQWKTP) is the 4Fe-4S ferredoxin-type domain.

It belongs to the ETF-QO/FixC family. [4Fe-4S] cluster serves as cofactor. The cofactor is FAD.

The protein resides in the mitochondrion inner membrane. The catalysed reaction is a ubiquinone + reduced [electron-transfer flavoprotein] = a ubiquinol + oxidized [electron-transfer flavoprotein] + H(+). In terms of biological role, accepts electrons from ETF and reduces ubiquinone. The polypeptide is Probable electron transfer flavoprotein-ubiquinone oxidoreductase, mitochondrial (Schizosaccharomyces pombe (strain 972 / ATCC 24843) (Fission yeast)).